We begin with the raw amino-acid sequence, 282 residues long: Ribosomal RNA small subunit methyltransferase A (282 aa).

His15, Leu17, Gly42, Glu64, Asp89, and Asn109 together coordinate S-adenosyl-L-methionine.

Belongs to the class I-like SAM-binding methyltransferase superfamily. rRNA adenine N(6)-methyltransferase family. RsmA subfamily.

It is found in the cytoplasm. It carries out the reaction adenosine(1518)/adenosine(1519) in 16S rRNA + 4 S-adenosyl-L-methionine = N(6)-dimethyladenosine(1518)/N(6)-dimethyladenosine(1519) in 16S rRNA + 4 S-adenosyl-L-homocysteine + 4 H(+). Its function is as follows. Specifically dimethylates two adjacent adenosines (A1518 and A1519) in the loop of a conserved hairpin near the 3'-end of 16S rRNA in the 30S particle. May play a critical role in biogenesis of 30S subunits. In Prochlorococcus marinus (strain MIT 9211), this protein is Ribosomal RNA small subunit methyltransferase A.